Here is a 188-residue protein sequence, read N- to C-terminus: Putative manganese efflux pump MntP (188 aa).

Helical transmembrane passes span 3-23 (LYAL…VALA), 35-55 (IAAT…AGWV), 63-83 (FISE…GLKM), 104-126 (WMTV…GLAF), 140-160 (MAAT…GVLF), and 167-187 (AGGL…LGLI).

Belongs to the MntP (TC 9.B.29) family.

Its subcellular location is the cell inner membrane. Functionally, probably functions as a manganese efflux pump. The protein is Putative manganese efflux pump MntP of Neisseria gonorrhoeae (strain ATCC 700825 / FA 1090).